A 227-amino-acid chain; its full sequence is Extracellular deoxyribonuclease (227 aa).

The N-terminal stretch at 1–20 is a signal peptide; the sequence is MFRPLLSFTLARLVSLPLHA.

Belongs to the EndA/NucM nuclease family.

It is found in the secreted. The protein is Extracellular deoxyribonuclease of Aeromonas hydrophila.